The sequence spans 312 residues: Methionyl-tRNA formyltransferase (312 aa).

110 to 113 (SLLP) contributes to the (6S)-5,6,7,8-tetrahydrofolate binding site.

This sequence belongs to the Fmt family.

The enzyme catalyses L-methionyl-tRNA(fMet) + (6R)-10-formyltetrahydrofolate = N-formyl-L-methionyl-tRNA(fMet) + (6S)-5,6,7,8-tetrahydrofolate + H(+). Its function is as follows. Attaches a formyl group to the free amino group of methionyl-tRNA(fMet). The formyl group appears to play a dual role in the initiator identity of N-formylmethionyl-tRNA by promoting its recognition by IF2 and preventing the misappropriation of this tRNA by the elongation apparatus. This is Methionyl-tRNA formyltransferase from Koribacter versatilis (strain Ellin345).